Consider the following 403-residue polypeptide: Major capsid protein (403 aa).

The protein resides in the virion. Functionally, assembles to form an icosahedral capsid. The chain is Major capsid protein from Staphylococcus aureus.